Here is a 275-residue protein sequence, read N- to C-terminus: Glutamate racemase (275 aa).

Residues 12-13 (DS) and 44-45 (YG) each bind substrate. The active-site Proton donor/acceptor is Cys-75. 76–77 (NT) is a binding site for substrate. Cys-185 functions as the Proton donor/acceptor in the catalytic mechanism. Position 186–187 (186–187 (TH)) interacts with substrate.

This sequence belongs to the aspartate/glutamate racemases family.

The enzyme catalyses L-glutamate = D-glutamate. The protein operates within cell wall biogenesis; peptidoglycan biosynthesis. In terms of biological role, provides the (R)-glutamate required for cell wall biosynthesis. This Mycobacterium avium (strain 104) protein is Glutamate racemase.